The chain runs to 151 residues: Transcription elongation factor GreA (151 aa).

Positions alanine 41 to alanine 62 form a coiled coil.

The protein belongs to the GreA/GreB family.

Necessary for efficient RNA polymerase transcription elongation past template-encoded arresting sites. The arresting sites in DNA have the property of trapping a certain fraction of elongating RNA polymerases that pass through, resulting in locked ternary complexes. Cleavage of the nascent transcript by cleavage factors such as GreA or GreB allows the resumption of elongation from the new 3'terminus. GreA releases sequences of 2 to 3 nucleotides. This Cereibacter sphaeroides (strain ATCC 17023 / DSM 158 / JCM 6121 / CCUG 31486 / LMG 2827 / NBRC 12203 / NCIMB 8253 / ATH 2.4.1.) (Rhodobacter sphaeroides) protein is Transcription elongation factor GreA.